Here is a 207-residue protein sequence, read N- to C-terminus: MLGRPKLVLASGSPRRLALLNQAGIEPDALRPADVDETPTKGELPRSCANRLARAKAEAALQSIQLDDDLRGAYLLAADTVVAVGRRILPKAELVDEASQCLRLLSGRNHRVYTAVCLVTPKGSFRQRLIETKVRFKRLSEEDIDGYVGSGEWRGKAGGYAVQGIAGSFVVKIVGSYTNIVGLPLYETVSLLGGEGFPIRFGWLNAS.

Catalysis depends on aspartate 79, which acts as the Proton acceptor.

Belongs to the Maf family. YhdE subfamily. A divalent metal cation serves as cofactor.

It localises to the cytoplasm. It carries out the reaction dTTP + H2O = dTMP + diphosphate + H(+). The enzyme catalyses UTP + H2O = UMP + diphosphate + H(+). Its function is as follows. Nucleoside triphosphate pyrophosphatase that hydrolyzes dTTP and UTP. May have a dual role in cell division arrest and in preventing the incorporation of modified nucleotides into cellular nucleic acids. In Rhodopseudomonas palustris (strain BisB5), this protein is dTTP/UTP pyrophosphatase.